Reading from the N-terminus, the 218-residue chain is Pyridoxine/pyridoxamine 5'-phosphate oxidase (218 aa).

Substrate-binding positions include Arg14–Tyr17 and Lys72. FMN-binding positions include Arg67–Lys72, Tyr82–Thr83, Arg88, Lys89, and Gln111. Positions 129, 133, and 137 each coordinate substrate. FMN is bound by residues Gln146–Ser147 and Trp191. Arg197 to His199 provides a ligand contact to substrate. An FMN-binding site is contributed by Arg201.

It belongs to the pyridoxamine 5'-phosphate oxidase family. Homodimer. Requires FMN as cofactor.

The enzyme catalyses pyridoxamine 5'-phosphate + O2 + H2O = pyridoxal 5'-phosphate + H2O2 + NH4(+). The catalysed reaction is pyridoxine 5'-phosphate + O2 = pyridoxal 5'-phosphate + H2O2. Its pathway is cofactor metabolism; pyridoxal 5'-phosphate salvage; pyridoxal 5'-phosphate from pyridoxamine 5'-phosphate: step 1/1. It functions in the pathway cofactor metabolism; pyridoxal 5'-phosphate salvage; pyridoxal 5'-phosphate from pyridoxine 5'-phosphate: step 1/1. Its function is as follows. Catalyzes the oxidation of either pyridoxine 5'-phosphate (PNP) or pyridoxamine 5'-phosphate (PMP) into pyridoxal 5'-phosphate (PLP). This Escherichia coli O157:H7 protein is Pyridoxine/pyridoxamine 5'-phosphate oxidase.